Here is a 493-residue protein sequence, read N- to C-terminus: Intermediate cleaving peptidase 55, mitochondrial (493 aa).

A mitochondrion-targeting transit peptide spans 1-19 (MQFLARNLVRRVSRTQVVS). Asp-296, Asp-307, His-383, Glu-410, and Glu-433 together coordinate Mn(2+).

Belongs to the peptidase M24B family. Mn(2+) serves as cofactor.

The protein resides in the mitochondrion. The protein localises to the nucleus. Aminopeptidase which cleaves preprotein intermediates that carry destabilizing N-ter amino acid residues after the mitochondrial processing peptidase (MPP) cleavage site and is thus critical for stabilization of the mitochondrial proteome. The chain is Intermediate cleaving peptidase 55, mitochondrial from Arabidopsis thaliana (Mouse-ear cress).